We begin with the raw amino-acid sequence, 219 residues long: Large ribosomal subunit protein uL3 (219 aa).

The segment at 113 to 142 is disordered; it reads TTKGHGYQGNIHKDNQSRGPMAHGSRYHRR.

The protein belongs to the universal ribosomal protein uL3 family. Part of the 50S ribosomal subunit. Forms a cluster with proteins L14 and L19.

Functionally, one of the primary rRNA binding proteins, it binds directly near the 3'-end of the 23S rRNA, where it nucleates assembly of the 50S subunit. The polypeptide is Large ribosomal subunit protein uL3 (Limosilactobacillus reuteri (strain DSM 20016) (Lactobacillus reuteri)).